The sequence spans 461 residues: tRNA-2-methylthio-N(6)-dimethylallyladenosine synthase (461 aa).

Positions 25–143 (PTYSIITHGC…LPYLIDRHLS (119 aa)) constitute an MTTase N-terminal domain. [4Fe-4S] cluster-binding residues include Cys-34, Cys-70, Cys-104, Cys-179, Cys-183, and Cys-186. The region spanning 165–395 (RDNEYVGYVN…LDVAYPIFYE (231 aa)) is the Radical SAM core domain. One can recognise a TRAM domain in the interval 398–461 (KSYLGTIQEV…SFALTGEMVD (64 aa)).

It belongs to the methylthiotransferase family. MiaB subfamily. As to quaternary structure, monomer. It depends on [4Fe-4S] cluster as a cofactor.

Its subcellular location is the cytoplasm. The catalysed reaction is N(6)-dimethylallyladenosine(37) in tRNA + (sulfur carrier)-SH + AH2 + 2 S-adenosyl-L-methionine = 2-methylsulfanyl-N(6)-dimethylallyladenosine(37) in tRNA + (sulfur carrier)-H + 5'-deoxyadenosine + L-methionine + A + S-adenosyl-L-homocysteine + 2 H(+). Catalyzes the methylthiolation of N6-(dimethylallyl)adenosine (i(6)A), leading to the formation of 2-methylthio-N6-(dimethylallyl)adenosine (ms(2)i(6)A) at position 37 in tRNAs that read codons beginning with uridine. In Finegoldia magna (strain ATCC 29328 / DSM 20472 / WAL 2508) (Peptostreptococcus magnus), this protein is tRNA-2-methylthio-N(6)-dimethylallyladenosine synthase.